The chain runs to 1510 residues: Chromosome partition protein MukB (1510 aa).

Residues E6–D30 are a coiled coil. G75 to S82 is an ATP binding site. Coiled-coil stretches lie at residues Q346–S506, Q553–A633, M673–Q706, R821–F847, E876–Q1064, E1094–V1149, and D1249–S1305. Positions P707–R824 are flexible hinge.

This sequence belongs to the SMC family. MukB subfamily. Homodimerization via its hinge domain. Binds to DNA via its C-terminal region. Interacts, and probably forms a ternary complex, with MukE and MukF via its C-terminal region. The complex formation is stimulated by calcium or magnesium. Interacts with tubulin-related protein FtsZ.

It is found in the cytoplasm. Its subcellular location is the nucleoid. In terms of biological role, plays a central role in chromosome condensation, segregation and cell cycle progression. Functions as a homodimer, which is essential for chromosome partition. Involved in negative DNA supercoiling in vivo, and by this means organize and compact chromosomes. May achieve or facilitate chromosome segregation by condensation DNA from both sides of a centrally located replisome during cell division. This is Chromosome partition protein MukB from Haemophilus influenzae (strain 86-028NP).